The chain runs to 277 residues: Basic leucine zipper 9 (277 aa).

The tract at residues 73-141 (ADSPVSANKP…ESAKRSRRRK (69 aa)) is disordered. Ser-100 is modified (phosphoserine). Polar residues predominate over residues 109-118 (AGQSEMTNDP). A bZIP domain is found at 120–183 (DLKRIRRMNS…RSAGTNNRVL (64 aa)). Residues 122-141 (KRIRRMNSNRESAKRSRRRK) are basic motif. Residues 124 to 131 (IRRMNSNR) carry the Nuclear localization signal motif. Positions 148 to 162 (LETQVDSLKGDNSTL) are leucine-zipper.

This sequence belongs to the bZIP family. In terms of assembly, homodimer. Interacts with BZIP1, BZIP2, BZIP10, BZIP11, BZIP25, BZIP44, BZIP53 and BZIP63. Post-translationally, phosphorylated. As to expression, expressed in roots, shoots, stems, young leaves, and flowers, mostly in vascular tissues (e.g. phloem).

Its subcellular location is the nucleus. Transcription factor. This is Basic leucine zipper 9 (BZIP9) from Arabidopsis thaliana (Mouse-ear cress).